Consider the following 145-residue polypeptide: Large ribosomal subunit protein cL37 (145 aa).

The N-terminal 63 residues, 1 to 63 (MALLCFNSFT…PRKNSIFIAS (63 aa)), are a transit peptide targeting the chloroplast. The segment at 125–145 (KRRLRKKGNWPPSKMKKLEGV) is disordered.

Belongs to the chloroplast-specific ribosomal protein cL37 family. In terms of assembly, part of the 50S ribosomal subunit.

The protein localises to the plastid. Its subcellular location is the chloroplast. This is Large ribosomal subunit protein cL37 (PSRP5) from Pisum sativum (Garden pea).